A 374-amino-acid chain; its full sequence is Queuine tRNA-ribosyltransferase (374 aa).

The active-site Proton acceptor is the Asp-89. Substrate contacts are provided by residues 89-93 (DSGGF), Asp-143, Gln-187, and Gly-214. The interval 245-251 (GVGKPED) is RNA binding. Catalysis depends on Asp-264, which acts as the Nucleophile. The RNA binding; important for wobble base 34 recognition stretch occupies residues 269 to 273 (TRNAR). Zn(2+) contacts are provided by Cys-302, Cys-304, Cys-307, and His-333.

This sequence belongs to the queuine tRNA-ribosyltransferase family. In terms of assembly, homodimer. Within each dimer, one monomer is responsible for RNA recognition and catalysis, while the other monomer binds to the replacement base PreQ1. Zn(2+) serves as cofactor.

The catalysed reaction is 7-aminomethyl-7-carbaguanine + guanosine(34) in tRNA = 7-aminomethyl-7-carbaguanosine(34) in tRNA + guanine. Its pathway is tRNA modification; tRNA-queuosine biosynthesis. In terms of biological role, catalyzes the base-exchange of a guanine (G) residue with the queuine precursor 7-aminomethyl-7-deazaguanine (PreQ1) at position 34 (anticodon wobble position) in tRNAs with GU(N) anticodons (tRNA-Asp, -Asn, -His and -Tyr). Catalysis occurs through a double-displacement mechanism. The nucleophile active site attacks the C1' of nucleotide 34 to detach the guanine base from the RNA, forming a covalent enzyme-RNA intermediate. The proton acceptor active site deprotonates the incoming PreQ1, allowing a nucleophilic attack on the C1' of the ribose to form the product. After dissociation, two additional enzymatic reactions on the tRNA convert PreQ1 to queuine (Q), resulting in the hypermodified nucleoside queuosine (7-(((4,5-cis-dihydroxy-2-cyclopenten-1-yl)amino)methyl)-7-deazaguanosine). The chain is Queuine tRNA-ribosyltransferase from Shewanella oneidensis (strain ATCC 700550 / JCM 31522 / CIP 106686 / LMG 19005 / NCIMB 14063 / MR-1).